The primary structure comprises 127 residues: Large-conductance mechanosensitive channel (127 aa).

Transmembrane regions (helical) follow at residues 14 to 34 (VLDL…VKSL) and 69 to 89 (GAFL…FLIV).

The protein belongs to the MscL family. Homopentamer.

The protein resides in the cell membrane. Its function is as follows. Channel that opens in response to stretch forces in the membrane lipid bilayer. May participate in the regulation of osmotic pressure changes within the cell. This is Large-conductance mechanosensitive channel from Leuconostoc mesenteroides subsp. mesenteroides (strain ATCC 8293 / DSM 20343 / BCRC 11652 / CCM 1803 / JCM 6124 / NCDO 523 / NBRC 100496 / NCIMB 8023 / NCTC 12954 / NRRL B-1118 / 37Y).